The primary structure comprises 34 residues: Protamine-Z1/Z2 (34 aa).

A disordered region spans residues 1 to 34; that stretch reads PRRRRRSSRPVRRRRRYRRSTVARRRRRVVRRRR.

In terms of tissue distribution, testis.

Its subcellular location is the nucleus. It is found in the chromosome. Its function is as follows. Protamines substitute for histones in the chromatin of sperm during the haploid phase of spermatogenesis. They compact sperm DNA into a highly condensed, stable and inactive complex. In Thunnus thynnus (Atlantic bluefin tuna), this protein is Protamine-Z1/Z2.